The chain runs to 176 residues: Ribosome rescue factor SmrB (176 aa).

In terms of domain architecture, Smr spans 98-173; it reads LDLHGLTQMQ…GTAAILLLVE (76 aa).

This sequence belongs to the SmrB family. In terms of assembly, associates with collided ribosomes, but not with correctly translating polysomes.

Acts as a ribosome collision sensor. Detects stalled/collided disomes (pairs of ribosomes where the leading ribosome is stalled and a second ribosome has collided with it) and endonucleolytically cleaves mRNA at the 5' boundary of the stalled ribosome. Stalled/collided disomes form a new interface (primarily via the 30S subunits) that binds SmrB. Cleaved mRNA becomes available for tmRNA ligation, leading to ribosomal subunit dissociation and rescue of stalled ribosomes. The protein is Ribosome rescue factor SmrB of Serratia proteamaculans (strain 568).